The primary structure comprises 294 residues: NADH-cytochrome b5 reductase 1 (294 aa).

A helical transmembrane segment spans residues Pro18 to Leu38. In terms of domain architecture, FAD-binding FR-type spans Asp51–Thr154. FAD contacts are provided by residues Ala134–Gly149 and Ser160–Leu192.

It belongs to the flavoprotein pyridine nucleotide cytochrome reductase family. Monomer. Component of the 2-(3-amino-3-carboxypropyl)histidine synthase complex composed of DPH1, DPH2, DPH3 and a NADH-dependent reductase, predominantly CBR1. Requires FAD as cofactor.

Its subcellular location is the mitochondrion outer membrane. It carries out the reaction 2 Fe(III)-[cytochrome b5] + NADH = 2 Fe(II)-[cytochrome b5] + NAD(+) + H(+). The enzyme catalyses 2 Fe(3+)-[Dph3] + NADH = 2 Fe(2+)-[Dph3] + NAD(+) + H(+). Its pathway is protein modification; peptidyl-diphthamide biosynthesis. Its function is as follows. NADH-dependent reductase for DPH3 and cytochrome b5. Required for the first step of diphthamide biosynthesis, a post-translational modification of histidine which occurs in elongation factor 2. DPH1 and DPH2 transfer a 3-amino-3-carboxypropyl (ACP) group from S-adenosyl-L-methionine (SAM) to a histidine residue, the reaction is assisted by a reduction system comprising DPH3 and a NADH-dependent reductase, predominantly CBR1. By reducing DPH3, also involved in the formation of the tRNA wobble base modification mcm5s 2U (5-methoxycarbonylmethyl-2-thiouridine), mediated by the elongator complex. The cytochrome b5/NADH cytochrome b5 reductase electron transfer system supports the catalytic activity of several sterol biosynthetic enzymes. The chain is NADH-cytochrome b5 reductase 1 (CBR1) from Candida albicans (strain SC5314 / ATCC MYA-2876) (Yeast).